The sequence spans 271 residues: Aminoglycoside 3'-phosphotransferase (271 aa).

The active-site Proton acceptor is Asp198.

The protein belongs to the aminoglycoside phosphotransferase family.

The catalysed reaction is kanamycin A + ATP = kanamycin 3'-phosphate + ADP + H(+). Its function is as follows. Resistance to kanamycin and structurally-related aminoglycosides, including amikacin. The sequence is that of Aminoglycoside 3'-phosphotransferase (aphA1) from Escherichia coli.